The chain runs to 354 residues: Bacteriochlorophyll a protein (354 aa).

His-99, His-134, His-278, His-285, and His-286 together coordinate bacteriochlorophyll a.

As to quaternary structure, homotrimer. Each subunit contains 7 molecules of bacteriochlorophyll a.

Intermediary in the transfer of excitation energy from the chlorophyll to the reaction centers. The polypeptide is Bacteriochlorophyll a protein (fmoA) (Chlorobaculum thiosulfatiphilum (Chlorobium limicola f.sp. thiosulfatophilum)).